A 512-amino-acid chain; its full sequence is Cytoplasmic tRNA 2-thiolation protein 2-A (512 aa).

It belongs to the CTU2/NCS2 family.

The protein resides in the cytoplasm. It functions in the pathway tRNA modification; 5-methoxycarbonylmethyl-2-thiouridine-tRNA biosynthesis. In terms of biological role, plays a central role in 2-thiolation of mcm(5)S(2)U at tRNA wobble positions of tRNA(Lys), tRNA(Glu) and tRNA(Gln). May act by forming a heterodimer with ctu1/atpbd3 that ligates sulfur from thiocarboxylated urm1 onto the uridine of tRNAs at wobble position. The chain is Cytoplasmic tRNA 2-thiolation protein 2-A (ctu2-a) from Xenopus laevis (African clawed frog).